A 1044-amino-acid chain; its full sequence is Elongation factor 3 (1044 aa).

The stretch at 5-42 (AQSIKVLGELFEKLSVATAENREATATEIASFLNGNII) is one HEAT 1 repeat. ADP-binding residues include Ile42 and His44. Residues 45 to 80 (DVPEEFFKNLTKAVKDKKTAAAALETIAHIANENNL) form an HEAT 2 repeat. Ser83 lines the ADP pocket. 6 HEAT repeats span residues 86-123 (PYIV…AIDP), 124-162 (VAIK…AAKT), 166-203 (LRMP…TVDN), 205-241 (DIER…EVTP), 242-279 (ATLS…LVED), and 285-323 (PFLE…VGNV). 3 residues coordinate ADP: Thr392, His396, and Glu397. ABC transporter domains are found at residues 426-641 (DEGE…YYEL) and 667-993 (VKVS…KKED). ADP-binding residues include Asn703, Glu922, Asn925, and His951. The interval 975–1044 (GHNWVSGQGS…DAYVSSDDEF (70 aa)) is disordered. Residues 987 to 999 (RLEKKEDEGDKFD) show a composition bias toward basic and acidic residues. Basic residues predominate over residues 1009–1031 (NKKKKLSSAELRKKKKERMKKKK).

Belongs to the ABC transporter superfamily. ABCF family. EF3 subfamily. Monomer.

Its subcellular location is the cytoplasm. The enzyme catalyses ATP + H2O = ADP + phosphate + H(+). It participates in protein biosynthesis; polypeptide chain elongation. Its function is as follows. Ribosome-dependent ATPase that functions in cytoplasmic translation elongation. Required for the ATP-dependent release of deacylated tRNA from the ribosomal E-site during protein biosynthesis. Stimulates the eEF1A-dependent binding of aminoacyl-tRNA to the ribosomal A-site, which has reduced affinity for tRNA as long as the E-site is occupied. Assists translation termination by stimulating the release of nascent protein from the ribosome by release factors. This chain is Elongation factor 3 (TEF3), found in Eremothecium gossypii (strain ATCC 10895 / CBS 109.51 / FGSC 9923 / NRRL Y-1056) (Yeast).